The sequence spans 473 residues: Psoralen synthase (473 aa).

Residues Tyr-1–Val-17 form a helical membrane-spanning segment. A substrate specificity region spans residues Thr-350–Val-355. A heme-binding site is contributed by Cys-425.

The protein belongs to the cytochrome P450 family. Heme serves as cofactor.

It localises to the microsome membrane. It catalyses the reaction (7S)-marmesin + reduced [NADPH--hemoprotein reductase] + O2 = psoralen + acetone + oxidized [NADPH--hemoprotein reductase] + 2 H2O + H(+). Its pathway is secondary metabolite biosynthesis. In terms of biological role, involved in the biosynthesis of coumarins and furanocoumarins (FCs), natural products required for defense responses against attacks by predators with potential medical and agroindustrial usages such as anticoagulant, rodenticide and artificial vanilla substitutes. Involved in linear furanocumarin (psoralen) biosynthesis. Converts marmesin to psoralen and, with much lower affinity, 5-hydroxymarmesin to bergaptol. In Pastinaca sativa (Wild parsnip), this protein is Psoralen synthase.